The primary structure comprises 129 residues: UPF0225 protein XC_4246 (129 aa).

The protein belongs to the UPF0225 family.

In Xanthomonas campestris pv. campestris (strain 8004), this protein is UPF0225 protein XC_4246.